We begin with the raw amino-acid sequence, 68 residues long: uncharacterized protein (68 aa).

This is an uncharacterized protein from Enterobacteria phage T4 (Bacteriophage T4).